The chain runs to 226 residues: DnaJ homolog subfamily C member 30, mitochondrial (226 aa).

Residues 1–38 (MAAMRWRWWQRLLPWRLLQARGFPQNSAPSLGLGARTY) constitute a mitochondrion transit peptide. The region spanning 49–114 (ALYDLLGVPS…TLRRKYDRGL (66 aa)) is the J domain. The disordered stretch occupies residues 116–157 (SDEDLRGPGVRPSRTPAPDPGSPRTPPPTSRTHDGSRASPGA). Residues 130-144 (TPAPDPGSPRTPPPT) are compositionally biased toward pro residues. The chain crosses the membrane as a helical span at residues 208–225 (DTAAIFLIFSIFIIIGFY).

In terms of assembly, associates with the ATP synthase complex. Interacts with MT-ATP6; interaction is direct. Interacts with ATP5MC2; interaction is direct. In terms of tissue distribution, expressed in brain, heart, kidney, liver, lung, spleen, stomach and testis. Highly expressed in the brain. In the neocortex, expressed in most, if not all, glutamatergic excitatory projection neurons (pyramidal) and many interneurons, with the strongest signal noticeably in large pyramidal neurons of layer 3C. Also present in pyramidal neurons of layer 3C PNs of the superior temporal cortex, as well as in pyramidal neurons (Betz cells) of the layer 5B primary motor cortex (at protein level).

The protein localises to the mitochondrion inner membrane. Functionally, mitochondrial protein enriched in neurons that acts as a regulator of mitochondrial respiration. Associates with the ATP synthase complex and facilitates ATP synthesis. May be a chaperone protein involved in the turnover of the subunits of mitochondrial complex I N-module. It facilitates the degradation of N-module subunits damaged by oxidative stress, and contributes to complex I functional efficiency. The chain is DnaJ homolog subfamily C member 30, mitochondrial from Homo sapiens (Human).